We begin with the raw amino-acid sequence, 452 residues long: Digeranylgeranylglycerophospholipid reductase (452 aa).

FAD is bound by residues 15-16 (FA), 35-36 (DS), and 45-50 (KPCGDA). Histidine 55 contacts a 2,3-bis-O-phytanyl-sn-glycerol 1-phospholipid. The FAD site is built by alanine 122 and aspartate 288. Histidine 297 provides a ligand contact to a 2,3-bis-O-phytanyl-sn-glycerol 1-phospholipid. 300–301 (GK) is an FAD binding site. A disulfide bond links cysteine 310 and cysteine 335. Tyrosine 340 serves as a coordination point for a 2,3-bis-O-phytanyl-sn-glycerol 1-phospholipid.

This sequence belongs to the geranylgeranyl reductase family. As to quaternary structure, monomer. It depends on FAD as a cofactor.

It carries out the reaction a 2,3-bis-O-phytanyl-sn-glycerol 1-phospholipid + 8 A = a 2,3-bis-O-(geranylgeranyl)-sn-glycerol 1-phospholipid + 8 AH2. The enzyme catalyses 2,3-bis-O-(phytanyl)-sn-glycerol 1-phosphate + 8 A = 2,3-bis-O-(geranylgeranyl)-sn-glycerol 1-phosphate + 8 AH2. It catalyses the reaction sn-3-O-phytanylglycerol 1-phosphate + 4 A = sn-3-O-(geranylgeranyl)glycerol 1-phosphate + 4 AH2. The catalysed reaction is phytyl diphosphate + 3 A = (2E,6E,10E)-geranylgeranyl diphosphate + 3 AH2. It participates in membrane lipid metabolism; glycerophospholipid metabolism. In terms of biological role, is involved in the reduction of 2,3-digeranylgeranylglycerophospholipids (unsaturated archaeols) into 2,3-diphytanylglycerophospholipids (saturated archaeols) in the biosynthesis of archaeal membrane lipids. Catalyzes the formation of archaetidic acid (2,3-di-O-phytanyl-sn-glyceryl phosphate) from 2,3-di-O-geranylgeranylglyceryl phosphate (DGGGP) via the hydrogenation of each double bond of the isoprenoid chains. Is not active with NADPH or NADH as an electron donor; the physiological reducing agent is unknown. Is also active on the more upstream precursors of membrane lipid biosynthesis, catalyzing the complete reduction of 3-O-geranylgeranylglyceryl phosphate (GGGP) to 3-O-phytanylglyceryl phosphate, and the partial reduction of geranylgeranyl diphosphate (GGPP) to phytyl diphosphate, thus reducing three of four GGPP double bonds and preserving the allylic double bond (at position 2). This reaction product is a reactive prenyl donor, which can be used as a substrate by archaeal prenyltransferases such as GGGP synthases. The chain is Digeranylgeranylglycerophospholipid reductase from Sulfolobus acidocaldarius (strain ATCC 33909 / DSM 639 / JCM 8929 / NBRC 15157 / NCIMB 11770).